A 265-amino-acid chain; its full sequence is 3-methyl-2-oxobutanoate hydroxymethyltransferase (265 aa).

Mg(2+) contacts are provided by Asp-44 and Asp-83. Residues 44 to 45 (DS), Asp-83, and Lys-113 each bind 3-methyl-2-oxobutanoate. Position 115 (Glu-115) interacts with Mg(2+). The Proton acceptor role is filled by Glu-183.

It belongs to the PanB family. In terms of assembly, homodecamer; pentamer of dimers. Mg(2+) serves as cofactor.

The protein localises to the cytoplasm. The enzyme catalyses 3-methyl-2-oxobutanoate + (6R)-5,10-methylene-5,6,7,8-tetrahydrofolate + H2O = 2-dehydropantoate + (6S)-5,6,7,8-tetrahydrofolate. The protein operates within cofactor biosynthesis; (R)-pantothenate biosynthesis; (R)-pantoate from 3-methyl-2-oxobutanoate: step 1/2. In terms of biological role, catalyzes the reversible reaction in which hydroxymethyl group from 5,10-methylenetetrahydrofolate is transferred onto alpha-ketoisovalerate to form ketopantoate. In Leptospira interrogans serogroup Icterohaemorrhagiae serovar copenhageni (strain Fiocruz L1-130), this protein is 3-methyl-2-oxobutanoate hydroxymethyltransferase.